The sequence spans 68 residues: MAKNLTPSDAKLEITQIKGVIGAKQNQKATLRSLGLKRIGHTVVRNADAVTVGMLNTVPHLVNVEEAK.

This sequence belongs to the universal ribosomal protein uL30 family. Part of the 50S ribosomal subunit.

This chain is Large ribosomal subunit protein uL30, found in Paenarthrobacter aurescens (strain TC1).